A 231-amino-acid polypeptide reads, in one-letter code: Uracil-DNA glycosylase (231 aa).

Asp-70 acts as the Proton acceptor in catalysis.

It belongs to the uracil-DNA glycosylase (UDG) superfamily. UNG family.

It localises to the cytoplasm. It catalyses the reaction Hydrolyzes single-stranded DNA or mismatched double-stranded DNA and polynucleotides, releasing free uracil.. Excises uracil residues from the DNA which can arise as a result of misincorporation of dUMP residues by DNA polymerase or due to deamination of cytosine. The protein is Uracil-DNA glycosylase of Campylobacter curvus (strain 525.92).